The primary structure comprises 610 residues: Dihydroxy-acid dehydratase (610 aa).

Residue Asp-81 participates in Mg(2+) binding. Cys-122 is a [2Fe-2S] cluster binding site. The Mg(2+) site is built by Asp-123 and Lys-124. N6-carboxylysine is present on Lys-124. Cys-193 contributes to the [2Fe-2S] cluster binding site. Residue Glu-489 coordinates Mg(2+). The active-site Proton acceptor is Ser-515.

Belongs to the IlvD/Edd family. In terms of assembly, homodimer. [2Fe-2S] cluster serves as cofactor. Requires Mg(2+) as cofactor.

It catalyses the reaction (2R)-2,3-dihydroxy-3-methylbutanoate = 3-methyl-2-oxobutanoate + H2O. The enzyme catalyses (2R,3R)-2,3-dihydroxy-3-methylpentanoate = (S)-3-methyl-2-oxopentanoate + H2O. It participates in amino-acid biosynthesis; L-isoleucine biosynthesis; L-isoleucine from 2-oxobutanoate: step 3/4. It functions in the pathway amino-acid biosynthesis; L-valine biosynthesis; L-valine from pyruvate: step 3/4. Functions in the biosynthesis of branched-chain amino acids. Catalyzes the dehydration of (2R,3R)-2,3-dihydroxy-3-methylpentanoate (2,3-dihydroxy-3-methylvalerate) into 2-oxo-3-methylpentanoate (2-oxo-3-methylvalerate) and of (2R)-2,3-dihydroxy-3-methylbutanoate (2,3-dihydroxyisovalerate) into 2-oxo-3-methylbutanoate (2-oxoisovalerate), the penultimate precursor to L-isoleucine and L-valine, respectively. This Xylella fastidiosa (strain M12) protein is Dihydroxy-acid dehydratase.